The primary structure comprises 905 residues: DNA mismatch repair protein MutS (905 aa).

The interval 1 to 95 is disordered; that stretch reads MELSLQGSLF…PAWGHHSQLK (95 aa). A compositionally biased stretch (basic and acidic residues) spans 38 to 50; sequence NLSDADLSKDALA. ATP is bound at residue 721-728; sequence GPNASGKS.

Belongs to the DNA mismatch repair MutS family.

In terms of biological role, this protein is involved in the repair of mismatches in DNA. It is possible that it carries out the mismatch recognition step. This protein has a weak ATPase activity. This chain is DNA mismatch repair protein MutS, found in Synechococcus sp. (strain CC9902).